Consider the following 299-residue polypeptide: Junctional adhesion molecule A (299 aa).

The signal sequence occupies residues 1 to 27; it reads MGTKAQVERKLLCLFILAILLCSLALG. Ig-like V-type domains are found at residues 28–125 and 135–228; these read SVTV…VKVK and PTVN…NAVR. Topologically, residues 28–238 are extracellular; it reads SVTVHSSEPE…MEAVERNVGV (211 aa). 2 disulfide bridges follow: Cys-50-Cys-109 and Cys-153-Cys-212. N-linked (GlcNAc...) asparagine glycosylation is present at Asn-185. The chain crosses the membrane as a helical span at residues 239-259; it reads IVAAVLVTLILLGILVFGIWF. The Cytoplasmic portion of the chain corresponds to 260 to 299; the sequence is AYSRGHFDRTKKGTSSKKVIYSQPSARSEGEFKQTSSFLV. Phosphoserine occurs at positions 281, 284, and 287.

It belongs to the immunoglobulin superfamily. As to quaternary structure, interacts with the ninth PDZ domain of MPDZ. Interacts with the first PDZ domain of PARD3. The association between PARD3 and PARD6B probably disrupts this interaction. Interacts with ITGAL (via I-domain). Interacts with CD151. (Microbial infection) Interacts with Mammalian reovirus sigma-1 capsid protein. In terms of assembly, (Microbial infection) Interacts with Human Rotavirus strain Wa vp4 capsid protein. N-glycosylated. In terms of processing, (Microbial infection) Cleaved by H.pylori virulence factor PqqE. Cleavage leads to altered tight junction functions. In terms of tissue distribution, expressed in endothelium, epithelium and leukocytes (at protein level).

It is found in the cell junction. Its subcellular location is the tight junction. The protein localises to the cell membrane. Its function is as follows. Seems to play a role in epithelial tight junction formation. Appears early in primordial forms of cell junctions and recruits PARD3. The association of the PARD6-PARD3 complex may prevent the interaction of PARD3 with JAM1, thereby preventing tight junction assembly. Plays a role in regulating monocyte transmigration involved in integrity of epithelial barrier. Ligand for integrin alpha-L/beta-2 involved in memory T-cell and neutrophil transmigration. Involved in platelet activation. In terms of biological role, (Microbial infection) Acts as a receptor for Mammalian reovirus sigma-1. (Microbial infection) Acts as a receptor for Human Rotavirus strain Wa. The chain is Junctional adhesion molecule A (F11R) from Homo sapiens (Human).